Here is a 139-residue protein sequence, read N- to C-terminus: Large ribosomal subunit protein uL16 (139 aa).

This sequence belongs to the universal ribosomal protein uL16 family. In terms of assembly, part of the 50S ribosomal subunit.

Its function is as follows. Binds 23S rRNA and is also seen to make contacts with the A and possibly P site tRNAs. This is Large ribosomal subunit protein uL16 from Koribacter versatilis (strain Ellin345).